We begin with the raw amino-acid sequence, 368 residues long: Alanine racemase (368 aa).

The active-site Proton acceptor; specific for D-alanine is the Lys40. Lys40 carries the post-translational modification N6-(pyridoxal phosphate)lysine. Residue Arg134 participates in substrate binding. Residue Tyr263 is the Proton acceptor; specific for L-alanine of the active site. Residue Met310 participates in substrate binding.

The protein belongs to the alanine racemase family. The cofactor is pyridoxal 5'-phosphate.

It catalyses the reaction L-alanine = D-alanine. It participates in amino-acid biosynthesis; D-alanine biosynthesis; D-alanine from L-alanine: step 1/1. Functionally, catalyzes the interconversion of L-alanine and D-alanine. May also act on other amino acids. The chain is Alanine racemase (alr) from Listeria monocytogenes serovar 1/2a (strain ATCC BAA-679 / EGD-e).